A 215-amino-acid chain; its full sequence is Protein Thf1 (215 aa).

A coiled-coil region spans residues 182–213 (ERMDQAVELVEETIAAEKRKKERRLEEQAQRT).

Belongs to the THF1 family.

Functionally, may be involved in photosynthetic membrane biogenesis. The sequence is that of Protein Thf1 from Synechococcus sp. (strain CC9605).